We begin with the raw amino-acid sequence, 209 residues long: Response regulator protein VraR (209 aa).

Residues 4-120 (KVLFVDDHEM…DIADAVRKTS (117 aa)) enclose the Response regulatory domain. At D55 the chain carries 4-aspartylphosphate. Residues 141–206 (RAELYEMLTE…QAVIYAFQHN (66 aa)) enclose the HTH luxR-type domain. The segment at residues 165 to 184 (NQEIASASHITIKTVKTHVS) is a DNA-binding region (H-T-H motif).

Homodimer. Post-translationally, phosphorylated by VraS. Phosphorylation state of VraR controls dimerization of the protein.

The protein resides in the cytoplasm. Functionally, member of the two-component regulatory system VraS/VraR involved in the control of the cell wall peptidoglycan biosynthesis. Upon cellular stress, the histidine kinase VraS transfers the phosphoryl group onto VraR. Upon phosphorylation, VraR dimerizes at the N-terminal domain. In turn, phosphorylation-induced dimerization expands and enhances the VraR binding to its own promoter leading to increased expression and subsequent modulation of as many as 40 genes, which ultimately constitute the S.aureus response to cell wall damage. In addition, inhibits the host autophagic flux and delays the early stage of autophagosome formation, thereby promoting bacterial survival. Facilitates the ability of S.aureus to resist host polymorphonuclear leukocytes-mediated phagocytosis and killing thus contributing to immune evasion. The protein is Response regulator protein VraR (vraR) of Staphylococcus aureus (strain Mu3 / ATCC 700698).